Reading from the N-terminus, the 313-residue chain is Heterogeneous nuclear ribonucleoproteins C1/C2 (313 aa).

Ala-2 is subject to N-acetylalanine. Glycyl lysine isopeptide (Lys-Gly) (interchain with G-Cter in SUMO2) cross-links involve residues Lys-8, Lys-50, Lys-89, and Lys-94. Residues 16-87 form the RRM domain; it reads SRVFIGNLNT…QVLDINLAAE (72 aa). Ser-113, Ser-115, and Ser-121 each carry phosphoserine. Disordered regions lie at residues 139-191 and 219-313; these read YPAR…KLKG and EKEQ…EDDS. The Nuclear localization signal motif lies at 155–161; it reads PSKRQRV. A phosphoserine mark is found at Ser-162 and Ser-166. Over residues 175–186 the composition is skewed to low complexity; that stretch reads SKSGQRGSSSKS. Lys-176 carries the post-translational modification N6-acetyllysine; alternate. Lys-176 is covalently cross-linked (Glycyl lysine isopeptide (Lys-Gly) (interchain with G-Cter in SUMO2); alternate). Residues 191 to 226 are a coiled coil; sequence GDDLQAIKKELTQIKQKVDSLLESLEKIEKEQSKQA. Lys-224 participates in a covalent cross-link: Glycyl lysine isopeptide (Lys-Gly) (interchain with G-Cter in SUMO2). Ser-229, Ser-231, and Ser-232 each carry phosphoserine. A Glycyl lysine isopeptide (Lys-Gly) (interchain with G-Cter in SUMO2) cross-link involves residue Lys-237. A Glycyl lysine isopeptide (Lys-Gly) (interchain with G-Cter in SUMO2); alternate cross-link involves residue Lys-240. Lys-240 participates in a covalent cross-link: Glycyl lysine isopeptide (Lys-Gly) (interchain with G-Cter in SUMO1); alternate. Residues Ser-241, Ser-246, Ser-247, and Ser-249 each carry the phosphoserine modification. Positions 250–261 are enriched in basic and acidic residues; it reads VKKDETNVKMES. Residues Lys-251 and Lys-252 each participate in a glycyl lysine isopeptide (Lys-Gly) (interchain with G-Cter in SUMO2) cross-link. Lys-258 participates in a covalent cross-link: Glycyl lysine isopeptide (Lys-Gly) (interchain with G-Cter in SUMO2); alternate. Lys-258 participates in a covalent cross-link: Glycyl lysine isopeptide (Lys-Gly) (interchain with G-Cter in SUMO); alternate. Phosphoserine is present on residues Ser-261 and Ser-268. Acidic residues predominate over residues 263 to 284; sequence AGADDSAEEGDLLDDDDNEDRG. A compositionally biased stretch (basic and acidic residues) spans 285-294; that stretch reads DDQLELKDDE. Residues 295-313 show a composition bias toward acidic residues; it reads KEPEEGEDDRDSANGEDDS. A phosphoserine mark is found at Ser-306 and Ser-313.

Belongs to the RRM HNRPC family. RALY subfamily. As to quaternary structure, tetramer composed of 3 copies of isoform C1 and 1 copy of isoform C2. Assembly of 3 tetramers with bound pre-mRNA gives rise to a 19S complex that interacts with HNRNPA2B1 tetramers. Component of the 40S hnRNP particle. Identified in the spliceosome C complex. Interacts with IGF2BP1. Interacts with DHX9; this interaction is direct, enhanced probably by their concomitant binding to RNA and mediates the attachment to actin filaments. Interacts with PPIA/CYPA. In terms of processing, phosphorylated on Ser-268 and Ser-306 in resting cells. Post-translationally, sumoylated. Sumoylation reduces affinity for mRNA. Ubiquitinated and degraded after nucleo-cytoplasmic transport by YWHAE.

It is found in the nucleus. Its function is as follows. Binds pre-mRNA and nucleates the assembly of 40S hnRNP particles. Interacts with poly-U tracts in the 3'-UTR or 5'-UTR of mRNA and modulates the stability and the level of translation of bound mRNA molecules. Single HNRNPC tetramers bind 230-240 nucleotides. Trimers of HNRNPC tetramers bind 700 nucleotides. May play a role in the early steps of spliceosome assembly and pre-mRNA splicing. N6-methyladenosine (m6A) has been shown to alter the local structure in mRNAs and long non-coding RNAs (lncRNAs) via a mechanism named 'm(6)A-switch', facilitating binding of HNRNPC, leading to regulation of mRNA splicing. The chain is Heterogeneous nuclear ribonucleoproteins C1/C2 (Hnrnpc) from Mus musculus (Mouse).